The following is a 132-amino-acid chain: MVMTDPIADLLTRVRNANIARHEAVEIPASNIKKAIANIMLQEGYITDLEEYNDGAVPMLKITMKYGQNKERVITGLKRISKPGLRVYCRKDEVPKVLNGLGTAVISTSKGILPDKEARKLSIGGEVLCYIW.

Belongs to the universal ribosomal protein uS8 family. As to quaternary structure, part of the 30S ribosomal subunit. Contacts proteins S5 and S12.

Its function is as follows. One of the primary rRNA binding proteins, it binds directly to 16S rRNA central domain where it helps coordinate assembly of the platform of the 30S subunit. The polypeptide is Small ribosomal subunit protein uS8 (Clostridium tetani (strain Massachusetts / E88)).